Here is a 634-residue protein sequence, read N- to C-terminus: Threonine--tRNA ligase (634 aa).

Residues 1-142 form an editing domain region; it reads MQLLLIHSDY…LSRSIRPEGA (142 aa). Residues 214–513 are catalytic; the sequence is PHVELMRRLE…TEEGKVPMLP (300 aa). Cys306, His358, and His482 together coordinate Zn(2+).

The protein belongs to the class-II aminoacyl-tRNA synthetase family. As to quaternary structure, homodimer. It depends on Zn(2+) as a cofactor.

The protein resides in the cytoplasm. The enzyme catalyses tRNA(Thr) + L-threonine + ATP = L-threonyl-tRNA(Thr) + AMP + diphosphate + H(+). Functionally, catalyzes the attachment of threonine to tRNA(Thr) in a two-step reaction: L-threonine is first activated by ATP to form Thr-AMP and then transferred to the acceptor end of tRNA(Thr). Edits incorrectly charged L-seryl-tRNA(Thr) probably via its editing domain (tested with total bovine tRNA). Activates L-serine, but does not detectably transfer it to tRNA (tested with total bovine tRNA). This is Threonine--tRNA ligase from Methanosarcina mazei (strain ATCC BAA-159 / DSM 3647 / Goe1 / Go1 / JCM 11833 / OCM 88) (Methanosarcina frisia).